The sequence spans 232 residues: MARRPDLKTGPERLAALVRTTVPPMHPAGLPFVGASLAVALAGRKSRWLRNAGVASAAANAAFFRHPPRTPPTRPGVVVAPADGLICLIEDELPPAELELPAVPLPRISIFLSLFDAHVQRAPLAGEVVAVEHRPGLFGSAELAAASADNERNSVVIRSPEGAEVIAVQIAGLLARRIVCNVKSGDKVGLGDTYGLIRYGSRLDTYLPAGSDVLVEVGQRAVAGETVLAELP.

The active-site Schiff-base intermediate with substrate; via pyruvic acid is the Ser-201. A Pyruvic acid (Ser); by autocatalysis modification is found at Ser-201.

This sequence belongs to the phosphatidylserine decarboxylase family. PSD-A subfamily. As to quaternary structure, heterodimer of a large membrane-associated beta subunit and a small pyruvoyl-containing alpha subunit. It depends on pyruvate as a cofactor. Post-translationally, is synthesized initially as an inactive proenzyme. Formation of the active enzyme involves a self-maturation process in which the active site pyruvoyl group is generated from an internal serine residue via an autocatalytic post-translational modification. Two non-identical subunits are generated from the proenzyme in this reaction, and the pyruvate is formed at the N-terminus of the alpha chain, which is derived from the carboxyl end of the proenzyme. The post-translation cleavage follows an unusual pathway, termed non-hydrolytic serinolysis, in which the side chain hydroxyl group of the serine supplies its oxygen atom to form the C-terminus of the beta chain, while the remainder of the serine residue undergoes an oxidative deamination to produce ammonia and the pyruvoyl prosthetic group on the alpha chain.

The protein localises to the cell membrane. The catalysed reaction is a 1,2-diacyl-sn-glycero-3-phospho-L-serine + H(+) = a 1,2-diacyl-sn-glycero-3-phosphoethanolamine + CO2. The protein operates within phospholipid metabolism; phosphatidylethanolamine biosynthesis; phosphatidylethanolamine from CDP-diacylglycerol: step 2/2. Its function is as follows. Catalyzes the formation of phosphatidylethanolamine (PtdEtn) from phosphatidylserine (PtdSer). This chain is Phosphatidylserine decarboxylase proenzyme, found in Mycolicibacterium gilvum (strain PYR-GCK) (Mycobacterium gilvum (strain PYR-GCK)).